A 291-amino-acid polypeptide reads, in one-letter code: MVHKPVLLNEVVEALSPKDGSVYVDATFGGGGYSRRILETAQCVVYAIDQDVVVKKYFDELLQSFPGRLNLAISRFSKLREVVLSFGVDKVDGVVFDLGTSAMQLADASRGFSFMNSGSLDMRMCSSALRDAAMFVNTVPEKEMADVIYQYGGERYSRRVARAIIDARRKCRINNTGDLATIIRSAVPRSRVHPIDPATRTFQAIRIWVNNELEELQAGLETAAEVLKIGGKILVTSFHSLEDRVVKHKFRSLCDMGFSLINKKAIMPTDEEVKNNPRSRSGKLRAIARVE.

Residues 31 to 33 (GGY), aspartate 49, phenylalanine 76, aspartate 97, and glutamine 104 contribute to the S-adenosyl-L-methionine site.

Belongs to the methyltransferase superfamily. RsmH family.

The protein resides in the cytoplasm. It carries out the reaction cytidine(1402) in 16S rRNA + S-adenosyl-L-methionine = N(4)-methylcytidine(1402) in 16S rRNA + S-adenosyl-L-homocysteine + H(+). Specifically methylates the N4 position of cytidine in position 1402 (C1402) of 16S rRNA. This chain is Ribosomal RNA small subunit methyltransferase H, found in Anaplasma marginale (strain St. Maries).